Here is a 123-residue protein sequence, read N- to C-terminus: Small ribosomal subunit protein uS12cz/uS12cy (123 aa).

This sequence belongs to the universal ribosomal protein uS12 family. As to quaternary structure, part of the 30S ribosomal subunit.

Its subcellular location is the plastid. The protein resides in the chloroplast. With S4 and S5 plays an important role in translational accuracy. Located at the interface of the 30S and 50S subunits. The polypeptide is Small ribosomal subunit protein uS12cz/uS12cy (rps12-A) (Psilotum nudum (Whisk fern)).